The following is a 79-amino-acid chain: Gene 68 protein (79 aa).

The tract at residues Glu58–Lys79 is disordered.

The protein is Gene 68 protein (68) of Mycobacterium (Mycobacteriophage L5).